A 216-amino-acid polypeptide reads, in one-letter code: GTP-binding nuclear protein spi1 (216 aa).

The Small GTPase Ran-type domain occupies 6–170; it reads NVPTFKLVLV…LWLARKLVGN (165 aa). 17–24 serves as a coordination point for GTP; it reads DGGTGKTT. T20 bears the Phosphothreonine mark. The switch-I stretch occupies residues 36–44; that stretch reads KKYIATLGV. GTP contacts are provided by residues G67, 121-124, and 149-151; these read NKVD and SAK. A switch-II region spans residues 67-83; it reads GQEKLGGLRDGYYIQGQ.

Belongs to the small GTPase superfamily. Ran family. Oligomer of dis3, pim1 and spi1. Found in a nuclear export complex with RanGTP, exportin and pre-miRNA. Interacts with fft3.

It localises to the nucleus. GTP-binding protein involved in nucleocytoplasmic transport. Required for the import of protein into the nucleus and also for RNA export. The chain is GTP-binding nuclear protein spi1 (spi1) from Schizosaccharomyces pombe (strain 972 / ATCC 24843) (Fission yeast).